Reading from the N-terminus, the 1083-residue chain is Protein HOS4 (1083 aa).

2 disordered regions span residues 1-233 (MNET…RKLV) and 267-328 (SSLF…YRDS). Residues Ser14 and Ser16 each carry the phosphoserine modification. Positions 24-62 (TRREELEKISKQETSEEEDTAGKHEQRETLSEEVSDKFP) are enriched in basic and acidic residues. The residue at position 37 (Thr37) is a Phosphothreonine. Ser67 is modified (phosphoserine). The segment covering 67–85 (SFRSQTTSVHQATQNNLNA) has biased composition (polar residues). The span at 86–118 (KESEDLAHKNDASSHEGEVNGDSRPDDVPETNE) shows a compositional bias: basic and acidic residues. The span at 135–149 (PNVRNVDIQNHQPFS) shows a compositional bias: polar residues. Residues 151–166 (DQLRAMLKEPKRKTVD) show a composition bias toward basic and acidic residues. The span at 167–185 (DFIEEEGLGAVEEEDLSDE) shows a compositional bias: acidic residues. Over residues 186 to 207 (VLEKNTTEPENVEKDIEYSDSD) the composition is skewed to basic and acidic residues. The span at 277–293 (VKETNNNLSNMNSSPAQ) shows a compositional bias: polar residues. Phosphoserine is present on Ser290. A compositionally biased stretch (low complexity) spans 300–310 (VSRSNDSNKSS). Over residues 314–323 (VSKRPKQKKG) the composition is skewed to basic residues. ANK repeat units lie at residues 329–359 (GGRT…DIND), 363–392 (AGNT…DVNI), and 398–427 (FGDT…DPTI). The interval 472–516 (AGIHNDKSKNGNNAHTIDQPPFDNTTKAKNEKAADSPSMASNIDE) is disordered. The segment covering 481–496 (NGNNAHTIDQPPFDNT) has biased composition (polar residues). Ser507 bears the Phosphoserine mark. ANK repeat units lie at residues 532 to 561 (AGKE…KIDL) and 593 to 622 (NKTS…DPTK). Disordered stretches follow at residues 661-742 (HSED…DDNE) and 762-790 (DEEK…ISKI). Acidic residues predominate over residues 665–675 (NNDDDDDDDNN). Ser698 bears the Phosphoserine mark. The residue at position 700 (Thr700) is a Phosphothreonine. Residues 721–740 (NNDRDVKESTTSDSRKRLDD) show a composition bias toward basic and acidic residues. Ser778 bears the Phosphoserine mark.

As to quaternary structure, identified in the Set3C complex with HOS2, HST1, SNT1, SIF2, CPR1 and SET3.

Unknown. Component of the Set3C complex, which is required to repress early/middle sporulation genes during meiosis. The chain is Protein HOS4 (HOS4) from Saccharomyces cerevisiae (strain ATCC 204508 / S288c) (Baker's yeast).